The chain runs to 191 residues: Protein GrpE (191 aa).

The interval 1–22 is disordered; it reads MKDKHNQEHDHLSQEEPESCEK.

The protein belongs to the GrpE family. In terms of assembly, homodimer.

Its subcellular location is the cytoplasm. Its function is as follows. Participates actively in the response to hyperosmotic and heat shock by preventing the aggregation of stress-denatured proteins, in association with DnaK and GrpE. It is the nucleotide exchange factor for DnaK and may function as a thermosensor. Unfolded proteins bind initially to DnaJ; upon interaction with the DnaJ-bound protein, DnaK hydrolyzes its bound ATP, resulting in the formation of a stable complex. GrpE releases ADP from DnaK; ATP binding to DnaK triggers the release of the substrate protein, thus completing the reaction cycle. Several rounds of ATP-dependent interactions between DnaJ, DnaK and GrpE are required for fully efficient folding. This chain is Protein GrpE, found in Helicobacter pylori (strain Shi470).